The sequence spans 555 residues: TBCC domain-containing protein 1 (555 aa).

In terms of domain architecture, C-CAP/cofactor C-like spans 302 to 433 (PEVSPMVIMS…LEDHMAQVGL (132 aa)).

Belongs to the TBCC family.

The protein resides in the cytoplasm. It localises to the cytoskeleton. It is found in the microtubule organizing center. The protein localises to the centrosome. Its subcellular location is the spindle pole. May play a role in the regulation of centrosome and Golgi apparatus positioning. This is TBCC domain-containing protein 1 (TBCCD1) from Gallus gallus (Chicken).